A 307-amino-acid chain; its full sequence is Protein phosphatase PTC7 homolog fig (307 aa).

The PPM-type phosphatase domain maps to 41–300 (VQGSSKDQQL…DDITVILASV (260 aa)). Residues D77, G78, and D222 each coordinate Mn(2+).

The protein belongs to the PP2C family. Requires Mg(2+) as cofactor. Mn(2+) is required as a cofactor.

It catalyses the reaction O-phospho-L-seryl-[protein] + H2O = L-seryl-[protein] + phosphate. The enzyme catalyses O-phospho-L-threonyl-[protein] + H2O = L-threonyl-[protein] + phosphate. This Drosophila grimshawi (Hawaiian fruit fly) protein is Protein phosphatase PTC7 homolog fig.